The primary structure comprises 284 residues: Tropomyosin (284 aa).

Positions 1-41 (MDAIKKKMQAMKLEKDNAVDRAETAEQQSRDAALRAEKAEE) are disordered. Positions 1 to 284 (MDAIKKKMQA…DQTFSELTGY (284 aa)) form a coiled coil. Residues 12–41 (KLEKDNAVDRAETAEQQSRDAALRAEKAEE) show a composition bias toward basic and acidic residues.

The protein belongs to the tropomyosin family. As to quaternary structure, homodimer.

In terms of biological role, tropomyosin, in association with the troponin complex, plays a central role in the calcium dependent regulation of muscle contraction. In Haemaphysalis longicornis (Bush tick), this protein is Tropomyosin.